The following is a 366-amino-acid chain: DENN domain-containing protein 10 (366 aa).

Positions 1–147 (MATSISLEDS…RVFNRGQFDV (147 aa)) constitute a uDENN domain. The cDENN domain maps to 169–309 (IKDIIQLFGE…EEITDQNVIK (141 aa)). The dDENN domain occupies 311-366 (LNLKMKELLTKLESLKETNEETGKSSITLESLETRKLPNGMSTFLFNIANAEGLNG).

It belongs to the DENND10 family.

It localises to the late endosome. Its function is as follows. Guanine nucleotide exchange factor (GEF) which may be involved in the regulation of homeostasis of late endocytic pathway, including endosomal positioning, maturation and secretion. This is DENN domain-containing protein 10 (dennd10) from Dictyostelium discoideum (Social amoeba).